Reading from the N-terminus, the 219-residue chain is Lipid transferase CIDEB (219 aa).

The 77-residue stretch at 34 to 110 (PQRPFRVCDH…VLQSGQSWSP (77 aa)) folds into the CIDE-N domain.

This sequence belongs to the CIDE family. In terms of assembly, interacts with DFFA. Interacts with DFFB; inhibited by DFFB. Interacts with APOB. Interacts with PREB/SEC12; facilitating loading of SCAP-SREBP into COPII vesicles. As to quaternary structure, (Microbial infection) Interacts (via N-terminus) with HCV non-structural protein 5A (via N-terminus); this interaction seems to regulate the association of HCV particles with ApoE. As to expression, highly expressed in liver and small intestine and, at lower levels, in colon, kidney and spleen.

It localises to the lipid droplet. The protein localises to the endoplasmic reticulum membrane. Its subcellular location is the golgi apparatus. The protein resides in the cytoplasmic vesicle. It is found in the COPI-coated vesicle. Its function is as follows. Lipid transferase specifically expressed in hepatocytes, which promotes unilocular lipid droplet formation by mediating lipid droplet fusion. Lipid droplet fusion promotes their enlargement, restricting lipolysis and favoring lipid storage. Localizes on the lipid droplet surface, at focal contact sites between lipid droplets, and mediates atypical lipid droplet fusion by promoting directional net neutral lipid transfer from the smaller to larger lipid droplets. The transfer direction may be driven by the internal pressure difference between the contacting lipid droplet pair. Promotes lipid exchange and lipid droplet fusion in both small and large lipid droplet-containing hepatocytes. In addition to its role in lipid droplet fusion, also involved in cytoplasmic vesicle biogenesis and transport. Required for very-low-density lipoprotein (VLDL) lipidation and maturation. Probably involved in the biogenesis of VLDL transport vesicles by forming a COPII vesicle coat and facilitating the formation of endoplasmic reticulum-derived large vesicles. Also involved in sterol-regulated export of the SCAP-SREBP complex, composed of SCAP, SREBF1/SREBP1 and SREBF2/SREBP2, by promoting loading of SCAP-SREBP into COPII vesicles. May also activate apoptosis. In terms of biological role, (Microbial infection) Involved in Hepatatis C virus (HCV) assembly and required for HCV entry into hepatocytes. This Homo sapiens (Human) protein is Lipid transferase CIDEB.